Reading from the N-terminus, the 215-residue chain is Ependymin-2 (215 aa).

The signal sequence occupies residues 1-20 (MHTVKLLCVVFSCLCAVAWA). Residues Asn71 and Asn94 are each glycosylated (N-linked (GlcNAc...) asparagine).

The protein belongs to the ependymin family. In terms of assembly, forms disulfide-linked dimers. Different glycosylation variants are known as EPD-beta and EPD-gamma. Post-translationally, binds calcium through the terminal sialic acids. EPDs are synthesized in the meninx and secreted in the cerebrospinal fluid.

Its subcellular location is the secreted. Its function is as follows. May play a role in neural plasticity. May be involved during axon regeneration. This Carassius auratus (Goldfish) protein is Ependymin-2 (epd2).